Consider the following 148-residue polypeptide: Caltractin (148 aa).

EF-hand domains follow at residues 4 to 39, 40 to 75, 77 to 112, and 113 to 148; these read EQKQ…LGFE, PKKE…KMGE, DSRE…LGEN, and MTDE…TSLF. Positions 17, 19, 21, 23, 28, 53, 55, 57, 59, and 64 each coordinate Ca(2+). Ca(2+)-binding residues include aspartate 126, aspartate 128, aspartate 130, glutamate 132, and glutamate 137.

This sequence belongs to the centrin family. Ubiquitous.

In terms of biological role, this calcium-binding protein is found in the basal body complexes (the functional homolog of the centrosome in animal cell). In mitotic cells it is specifically associated with the poles of the mitotic spindles at the sites of the duplicated basal body complexes. The protein is Caltractin of Tetraselmis striata (Green microalga).